The following is a 438-amino-acid chain: MPNFIDRRLNPKDKSLGNRQRFLKRAREELKRTIKERVKSGKIADVDAEQNVSMPARGVNEPAFQPDSNSGERRHVLPGNREFAAGDRIPKRGGGGGAGNAGAGTGQSEDEFQFVLSREEVLDLFFEDLELPDMVKLNLKESVTFKRRRAGFSASGSPTNINVGRTMRNSYGRRIALRRPSRREIEALADEIARLETEPGGRNKHRQRLEELRQTLDSLERRRRRIPYVDPVDIRFNRFEPQPLPNASAVMFCLMDVSASMGEREKDLAKRFFVLLHLFLKRRYERIDIVFIRHTDEAGEVDENTFFYSKQSGGTVVSTALEEMLRVIRERYPANEWNIYAAQASDGENISGDSERCASLLHDELMGLCQYYAYVEIIDERETEIFGTTDNGTSLWRAYRIVDGEWPNFQMTRIAKPADIYPVFRKLFGKQPEMQLRK.

A disordered region spans residues 55 to 107 (PARGVNEPAFQPDSNSGERRHVLPGNREFAAGDRIPKRGGGGGAGNAGAGTGQ). Gly residues predominate over residues 92–105 (RGGGGGAGNAGAGT).

The protein belongs to the UPF0229 family.

This is UPF0229 protein Smed_1028 from Sinorhizobium medicae (strain WSM419) (Ensifer medicae).